We begin with the raw amino-acid sequence, 915 residues long: DNA repair-scaffolding protein (915 aa).

Positions 1-15 are enriched in basic residues; it reads MPRGSRARGSKRKRS. 2 disordered regions span residues 1–30 and 56–114; these read MPRG…RPLQ and FQNT…EDKT. Over residues 56 to 65 the composition is skewed to polar residues; that stretch reads FQNTSGNPSL. Over residues 67-85 the composition is skewed to basic and acidic residues; sequence AEEKTITEKHLELCPRPKQ. Over residues 86–107 the composition is skewed to polar residues; sequence ETTTSKSTSGLTDITWSSSGSD. A necessary for interaction with RAD51 region spans residues 151 to 450; sequence EISDCASCAS…GTAWTHGHKE (300 aa).

In terms of assembly, found in a complex, at least composed of BLM, RAD51 and SPIDR; the complex formation is mediated by SPIDR. Interacts (via C-terminal region) with BLM; the interaction is direct. Interacts with RAD51; the interaction is direct. Interacts (via the C-terminal region) with FIGNL1 (via N-terminal one-half region); the interaction is direct.

The protein localises to the nucleus. Functionally, plays a role in DNA double-strand break (DBS) repair via homologous recombination (HR). Serves as a scaffolding protein that helps to promote the recruitment of DNA-processing enzymes like the helicase BLM and recombinase RAD51 to site of DNA damage, and hence contributes to maintain genomic integrity. The protein is DNA repair-scaffolding protein (SPIDR) of Homo sapiens (Human).